A 344-amino-acid chain; its full sequence is Microcin C7 self-immunity protein MccF (344 aa).

Belongs to the peptidase S66 family.

Involved in specific self-immunity to microcin C7. The chain is Microcin C7 self-immunity protein MccF (mccF) from Escherichia coli.